The chain runs to 631 residues: Protein FRIABLE 1 (631 aa).

Residues 1–13 (MSVGVPVNPSSSS) show a composition bias toward low complexity. Positions 1–36 (MSVGVPVNPSSSSQLPAAPTTTTRRRVADSQEDHSH) are disordered. The Cytoplasmic portion of the chain corresponds to 1-120 (MSVGVPVNPS…NMRSTTNLGR (120 aa)). The span at 26-36 (RVADSQEDHSH) shows a compositional bias: basic and acidic residues. Residues 121–141 (FILTLLSILVVTFFLIVALSG) traverse the membrane as a helical; Signal-anchor for type II membrane protein segment. Residues 142–631 (GVGRRRKHVE…RPSLRAQSLR (490 aa)) lie on the Lumenal side of the membrane. N-linked (GlcNAc...) asparagine glycosylation is found at Asn246, Asn329, and Asn364. 384 to 386 (HLR) contacts substrate. Residues Asn398 and Asn425 are each glycosylated (N-linked (GlcNAc...) asparagine).

It belongs to the glycosyltransferase GT106 family. Ubiquitous. Strong expression in young seedlings, particularly at the junction between hypocotyl and root, in emerging cotyledons, and in parts of the roots. Also detected in the inflorescence (sepals, petals, mature pollen and siliques) and rosette leaves.

The protein resides in the golgi apparatus membrane. Its pathway is glycan metabolism. Glycosyltransferase required for normal cell adhesion and cell wall integrity. The sequence is that of Protein FRIABLE 1 from Arabidopsis thaliana (Mouse-ear cress).